The sequence spans 231 residues: Large ribosomal subunit protein uL5m (231 aa).

It belongs to the universal ribosomal protein uL5 family.

It localises to the mitochondrion. In Prototheca wickerhamii, this protein is Large ribosomal subunit protein uL5m (RPL5).